The primary structure comprises 296 residues: 4-diphosphocytidyl-2-C-methyl-D-erythritol kinase (296 aa).

Residue Lys11 is part of the active site. 95–105 is a binding site for ATP; sequence PVAAGMAGGSS. The active site involves Asp137.

Belongs to the GHMP kinase family. IspE subfamily.

The catalysed reaction is 4-CDP-2-C-methyl-D-erythritol + ATP = 4-CDP-2-C-methyl-D-erythritol 2-phosphate + ADP + H(+). The protein operates within isoprenoid biosynthesis; isopentenyl diphosphate biosynthesis via DXP pathway; isopentenyl diphosphate from 1-deoxy-D-xylulose 5-phosphate: step 3/6. Catalyzes the phosphorylation of the position 2 hydroxy group of 4-diphosphocytidyl-2C-methyl-D-erythritol. This Clostridioides difficile (strain 630) (Peptoclostridium difficile) protein is 4-diphosphocytidyl-2-C-methyl-D-erythritol kinase.